A 106-amino-acid chain; its full sequence is uncharacterized protein (106 aa).

A run of 2 helical transmembrane segments spans residues 53 to 70 (LLLL…LDII) and 74 to 93 (ILGL…WTLI).

Its subcellular location is the cell membrane. This is an uncharacterized protein from Bacillus subtilis (strain 168).